The chain runs to 545 residues: tRNA-2-methylthio-N(6)-dimethylallyladenosine synthase (545 aa).

The segment at Met1–Thr32 is disordered. The MTTase N-terminal domain occupies Arg58 to His174. Residues Cys67, Cys103, Cys137, Cys211, Cys215, and Cys218 each coordinate [4Fe-4S] cluster. One can recognise a Radical SAM core domain in the interval Arg197 to Glu433. Residues Arg436–Val504 enclose the TRAM domain.

Belongs to the methylthiotransferase family. MiaB subfamily. In terms of assembly, monomer. It depends on [4Fe-4S] cluster as a cofactor.

The protein localises to the cytoplasm. The enzyme catalyses N(6)-dimethylallyladenosine(37) in tRNA + (sulfur carrier)-SH + AH2 + 2 S-adenosyl-L-methionine = 2-methylsulfanyl-N(6)-dimethylallyladenosine(37) in tRNA + (sulfur carrier)-H + 5'-deoxyadenosine + L-methionine + A + S-adenosyl-L-homocysteine + 2 H(+). Its function is as follows. Catalyzes the methylthiolation of N6-(dimethylallyl)adenosine (i(6)A), leading to the formation of 2-methylthio-N6-(dimethylallyl)adenosine (ms(2)i(6)A) at position 37 in tRNAs that read codons beginning with uridine. This is tRNA-2-methylthio-N(6)-dimethylallyladenosine synthase from Mycobacterium bovis (strain BCG / Pasteur 1173P2).